The sequence spans 237 residues: Ribose-5-phosphate isomerase A (237 aa).

Substrate is bound by residues 32–35, 85–88, and 99–102; these read TGRT, DGAD, and KGGG. Glu108 (proton acceptor) is an active-site residue. Arg126 serves as a coordination point for substrate.

It belongs to the ribose 5-phosphate isomerase family. In terms of assembly, homodimer.

It carries out the reaction aldehydo-D-ribose 5-phosphate = D-ribulose 5-phosphate. Its pathway is carbohydrate degradation; pentose phosphate pathway; D-ribose 5-phosphate from D-ribulose 5-phosphate (non-oxidative stage): step 1/1. Functionally, catalyzes the reversible conversion of ribose-5-phosphate to ribulose 5-phosphate. This Aeropyrum pernix (strain ATCC 700893 / DSM 11879 / JCM 9820 / NBRC 100138 / K1) protein is Ribose-5-phosphate isomerase A.